We begin with the raw amino-acid sequence, 78 residues long: UPF0335 protein RBE_1185 (78 aa).

It belongs to the UPF0335 family.

In Rickettsia bellii (strain RML369-C), this protein is UPF0335 protein RBE_1185.